The sequence spans 249 residues: Exosome complex component Rrp41 (249 aa).

The protein belongs to the RNase PH family. Rrp41 subfamily. As to quaternary structure, component of the archaeal exosome complex. Forms a hexameric ring-like arrangement composed of 3 Rrp41-Rrp42 heterodimers. The hexameric ring associates with a trimer of Rrp4 and/or Csl4 subunits.

It localises to the cytoplasm. Catalytic component of the exosome, which is a complex involved in RNA degradation. Has 3'-&gt;5' exoribonuclease activity. Can also synthesize heteromeric RNA-tails. This is Exosome complex component Rrp41 from Pyrococcus horikoshii (strain ATCC 700860 / DSM 12428 / JCM 9974 / NBRC 100139 / OT-3).